A 615-amino-acid polypeptide reads, in one-letter code: Dihydroxy-acid dehydratase (615 aa).

A Mg(2+)-binding site is contributed by D81. C122 is a binding site for [2Fe-2S] cluster. Residues D123 and K124 each contribute to the Mg(2+) site. K124 is modified (N6-carboxylysine). C195 contributes to the [2Fe-2S] cluster binding site. E491 contributes to the Mg(2+) binding site. S517 acts as the Proton acceptor in catalysis.

Belongs to the IlvD/Edd family. As to quaternary structure, homodimer. The cofactor is [2Fe-2S] cluster. Mg(2+) is required as a cofactor.

The catalysed reaction is (2R)-2,3-dihydroxy-3-methylbutanoate = 3-methyl-2-oxobutanoate + H2O. It carries out the reaction (2R,3R)-2,3-dihydroxy-3-methylpentanoate = (S)-3-methyl-2-oxopentanoate + H2O. Its pathway is amino-acid biosynthesis; L-isoleucine biosynthesis; L-isoleucine from 2-oxobutanoate: step 3/4. It participates in amino-acid biosynthesis; L-valine biosynthesis; L-valine from pyruvate: step 3/4. Its function is as follows. Functions in the biosynthesis of branched-chain amino acids. Catalyzes the dehydration of (2R,3R)-2,3-dihydroxy-3-methylpentanoate (2,3-dihydroxy-3-methylvalerate) into 2-oxo-3-methylpentanoate (2-oxo-3-methylvalerate) and of (2R)-2,3-dihydroxy-3-methylbutanoate (2,3-dihydroxyisovalerate) into 2-oxo-3-methylbutanoate (2-oxoisovalerate), the penultimate precursor to L-isoleucine and L-valine, respectively. The chain is Dihydroxy-acid dehydratase from Pseudoalteromonas atlantica (strain T6c / ATCC BAA-1087).